Here is a 667-residue protein sequence, read N- to C-terminus: E3 ubiquitin-protein ligase Midline-1 (667 aa).

The segment at 10-60 adopts an RING-type zinc-finger fold; that stretch reads CPICLELFEDPLLLPCAHSLCFNCAHRILVSHCATNESVESITAFQCPTCR. A phosphoserine mark is found at serine 92 and serine 96. 2 B box-type zinc fingers span residues 116–165 and 172–212; these read KVLC…IEPI and GLMC…VAAL. Residues cysteine 119, cysteine 122, cysteine 134, cysteine 137, cysteine 142, cysteine 145, histidine 150, histidine 159, cysteine 175, histidine 178, cysteine 198, and histidine 204 each coordinate Zn(2+). Residues 205–264 adopt a coiled-coil conformation; sequence RDHQVAALSERYDKLKQNLESNLTNLIKRNTELETLLAKLIQTCQHVEVNASRQEAKLTE. A COS domain is found at 320–379; that stretch reads LKENDHARFLQTAKNITERVSMATASSQVLIPEINLNDTFDTFALDFSREKKLLECLDYL. In terms of domain architecture, Fibronectin type-III spans 381-484; sequence APNPPTIREE…EPGKLKTNSQ (104 aa). Over residues 471 to 485 the composition is skewed to polar residues; that stretch reads SRSSEPGKLKTNSQP. A disordered region spans residues 471–524; that stretch reads SRSSEPGKLKTNSQPFKLDPKSAHRKLKVSHDNLTVERDESSSKKSHTPERFTS. The 178-residue stretch at 482-659 folds into the B30.2/SPRY domain; sequence NSQPFKLDPK…IITGLPIPDH (178 aa). The span at 499–520 shows a compositional bias: basic and acidic residues; it reads VSHDNLTVERDESSSKKSHTPE. Phosphoserine is present on serine 511.

Belongs to the TRIM/RBCC family. As to quaternary structure, homodimer or heterodimer with MID2. Interacts with IGBP1. Interacts with TRIM16. Post-translationally, phosphorylated on serine and threonine residues. As to expression, in the fetus, highest expression found in kidney, followed by brain and lung. Expressed at low levels in fetal liver. In the adult, most abundant in heart, placenta and brain.

The protein localises to the cytoplasm. Its subcellular location is the cytoskeleton. It localises to the spindle. The catalysed reaction is S-ubiquitinyl-[E2 ubiquitin-conjugating enzyme]-L-cysteine + [acceptor protein]-L-lysine = [E2 ubiquitin-conjugating enzyme]-L-cysteine + N(6)-ubiquitinyl-[acceptor protein]-L-lysine.. Its function is as follows. Has E3 ubiquitin ligase activity towards IGBP1, promoting its monoubiquitination, which results in deprotection of the catalytic subunit of protein phosphatase PP2A, and its subsequent degradation by polyubiquitination. In Homo sapiens (Human), this protein is E3 ubiquitin-protein ligase Midline-1 (MID1).